The following is a 352-amino-acid chain: Holliday junction branch migration complex subunit RuvB (352 aa).

The interval 5 to 191 (TDDFSEQRII…FGIVARLEFY (187 aa)) is large ATPase domain (RuvB-L). ATP-binding positions include L30, R31, G72, K75, T76, T77, 138-140 (EDY), R181, Y191, and R228. A Mg(2+)-binding site is contributed by T76. Residues 192–262 (TPLELTKIVT…MADAALVMLD (71 aa)) are small ATPAse domain (RuvB-S). A head domain (RuvB-H) region spans residues 265 to 352 (PVGFDLMDRK…GPNGDLWAGQ (88 aa)). Positions 301, 320, and 325 each coordinate DNA.

It belongs to the RuvB family. In terms of assembly, homohexamer. Forms an RuvA(8)-RuvB(12)-Holliday junction (HJ) complex. HJ DNA is sandwiched between 2 RuvA tetramers; dsDNA enters through RuvA and exits via RuvB. An RuvB hexamer assembles on each DNA strand where it exits the tetramer. Each RuvB hexamer is contacted by two RuvA subunits (via domain III) on 2 adjacent RuvB subunits; this complex drives branch migration. In the full resolvosome a probable DNA-RuvA(4)-RuvB(12)-RuvC(2) complex forms which resolves the HJ.

The protein resides in the cytoplasm. The enzyme catalyses ATP + H2O = ADP + phosphate + H(+). Functionally, the RuvA-RuvB-RuvC complex processes Holliday junction (HJ) DNA during genetic recombination and DNA repair, while the RuvA-RuvB complex plays an important role in the rescue of blocked DNA replication forks via replication fork reversal (RFR). RuvA specifically binds to HJ cruciform DNA, conferring on it an open structure. The RuvB hexamer acts as an ATP-dependent pump, pulling dsDNA into and through the RuvAB complex. RuvB forms 2 homohexamers on either side of HJ DNA bound by 1 or 2 RuvA tetramers; 4 subunits per hexamer contact DNA at a time. Coordinated motions by a converter formed by DNA-disengaged RuvB subunits stimulates ATP hydrolysis and nucleotide exchange. Immobilization of the converter enables RuvB to convert the ATP-contained energy into a lever motion, pulling 2 nucleotides of DNA out of the RuvA tetramer per ATP hydrolyzed, thus driving DNA branch migration. The RuvB motors rotate together with the DNA substrate, which together with the progressing nucleotide cycle form the mechanistic basis for DNA recombination by continuous HJ branch migration. Branch migration allows RuvC to scan DNA until it finds its consensus sequence, where it cleaves and resolves cruciform DNA. The chain is Holliday junction branch migration complex subunit RuvB from Janthinobacterium sp. (strain Marseille) (Minibacterium massiliensis).